Consider the following 254-residue polypeptide: Isoprenyl transferase (254 aa).

The active site involves Asp12. Asp12 is a Mg(2+) binding site. Substrate is bound by residues 13–16, Trp17, Arg25, His29, and 57–59; these read GNGR and SSE. Asn60 acts as the Proton acceptor in catalysis. Substrate-binding positions include Trp61, Arg63, Arg180, and 186–188; that span reads RLS. Residue Glu199 participates in Mg(2+) binding.

It belongs to the UPP synthase family. As to quaternary structure, homodimer. The cofactor is Mg(2+).

Functionally, catalyzes the condensation of isopentenyl diphosphate (IPP) with allylic pyrophosphates generating different type of terpenoids. This Brucella abortus biovar 1 (strain 9-941) protein is Isoprenyl transferase.